The primary structure comprises 358 residues: Mitogen-activated protein kinase 1 (358 aa).

Alanine 2 bears the N-acetylalanine mark. The 289-residue stretch at 23–311 folds into the Protein kinase domain; sequence YTNLSYIGEG…VEQALAHPYL (289 aa). Serine 27 is modified (phosphoserine; by SGK1). ATP-binding positions include 29 to 37 and lysine 52; that span reads IGEGAYGMV. Residue aspartate 147 is the Proton acceptor of the active site. Threonine 183 carries the phosphothreonine; by MAP2K1 and MAP2K2 modification. A TXY motif is present at residues 183 to 185; sequence TEY. Tyrosine 185 bears the Phosphotyrosine; by MAP2K1 and MAP2K2 mark. Phosphothreonine; by autocatalysis is present on threonine 188. Serine 244, serine 246, and serine 282 each carry phosphoserine.

It belongs to the protein kinase superfamily. CMGC Ser/Thr protein kinase family. MAP kinase subfamily. Binds both upstream activators and downstream substrates in multimolecular complexes. This interaction inhibits its tyrosine-kinase activity. Interacts with ADAM15, ARHGEF2, ARRB2, DAPK1 (via death domain), HSF4, IER3, IPO7, NISCH, SGK1, and isoform 1 of NEK2. Interacts (via phosphorylated form) with TPR (via C-terminal region and phosphorylated form); the interaction requires dimerization of MAPK1/ERK2 and increases following EGF stimulation. Interacts with MAP2K1. Interacts with DUSP6. Interacts (phosphorylated form) with CAV2 ('Tyr-19'-phosphorylated form); the interaction, promoted by insulin, leads to nuclear location and MAPK1 activation. Interacts with DCC. Interacts with MORG1. Interacts with PEA15. Interacts with MKNK2. MKNK2 isoform 1 binding prevents from dephosphorylation and inactivation. The phosphorylated form interacts with PML. Interacts with STYX. Interacts with CDK2AP2. Interacts with CAVIN4. Interacts with DUSP7; the interaction enhances DUSP7 phosphatase activity. Interacts with GIT1; this interaction is necessary for MAPK1 localization to focal adhesions. Interacts with ZNF263. Interacts with phosphoglycerate kinase PGK1; the interaction is direct, occurs under hypoxic conditions, and promotes interaction between PGK1 and PIN1. Mg(2+) is required as a cofactor. Dually phosphorylated on Thr-183 and Tyr-185, which activates the enzyme. Ligand-activated ALK induces tyrosine phosphorylation. Dephosphorylated by PTPRJ at Tyr-185. Phosphorylated upon FLT3 and KIT signaling. Dephosphorylated by DUSP1 and DUSP2 at Thr-183 and Tyr-185. In terms of processing, ISGylated. Post-translationally, ubiquitinated by TRIM15 via 'Lys-63'-linked ubiquitination; leading to activation. Deubiquitinated by CYLD. Widely expressed.

It localises to the cytoplasm. The protein resides in the cytoskeleton. It is found in the spindle. Its subcellular location is the nucleus. The protein localises to the microtubule organizing center. It localises to the centrosome. The protein resides in the membrane. It is found in the caveola. Its subcellular location is the cell junction. The protein localises to the focal adhesion. It carries out the reaction L-seryl-[protein] + ATP = O-phospho-L-seryl-[protein] + ADP + H(+). The catalysed reaction is L-threonyl-[protein] + ATP = O-phospho-L-threonyl-[protein] + ADP + H(+). With respect to regulation, phosphorylated by MAP2K1/MEK1 and MAP2K2/MEK2 on Thr-183 and Tyr-185 in response to external stimuli like insulin or NGF. Both phosphorylations are required for activity. This phosphorylation causes dramatic conformational changes, which enable full activation and interaction of MAPK1/ERK2 with its substrates. Phosphorylation on Ser-27 by SGK1 results in its activation by enhancing its interaction with MAP2K1/MEK1 and MAP2K2/MEK2. Dephosphorylated and inactivated by DUSP1, DUSP3, DUSP6 and DUSP9. Inactivated by pyrimidylpyrrole inhibitors. Functionally, serine/threonine kinase which acts as an essential component of the MAP kinase signal transduction pathway. MAPK1/ERK2 and MAPK3/ERK1 are the 2 MAPKs which play an important role in the MAPK/ERK cascade. They participate also in a signaling cascade initiated by activated KIT and KITLG/SCF. Depending on the cellular context, the MAPK/ERK cascade mediates diverse biological functions such as cell growth, adhesion, survival and differentiation through the regulation of transcription, translation, cytoskeletal rearrangements. The MAPK/ERK cascade also plays a role in initiation and regulation of meiosis, mitosis, and postmitotic functions in differentiated cells by phosphorylating a number of transcription factors. About 160 substrates have already been discovered for ERKs. Many of these substrates are localized in the nucleus, and seem to participate in the regulation of transcription upon stimulation. However, other substrates are found in the cytosol as well as in other cellular organelles, and those are responsible for processes such as translation, mitosis and apoptosis. Moreover, the MAPK/ERK cascade is also involved in the regulation of the endosomal dynamics, including lysosome processing and endosome cycling through the perinuclear recycling compartment (PNRC); as well as in the fragmentation of the Golgi apparatus during mitosis. The substrates include transcription factors (such as ATF2, BCL6, ELK1, ERF, FOS, HSF4 or SPZ1), cytoskeletal elements (such as CANX, CTTN, GJA1, MAP2, MAPT, PXN, SORBS3 or STMN1), regulators of apoptosis (such as BAD, BTG2, CASP9, DAPK1, IER3, MCL1 or PPARG), regulators of translation (such as EIF4EBP1 and FXR1) and a variety of other signaling-related molecules (like ARHGEF2, DCC, FRS2 or GRB10). Protein kinases (such as RAF1, RPS6KA1/RSK1, RPS6KA3/RSK2, RPS6KA2/RSK3, RPS6KA6/RSK4, SYK, MKNK1/MNK1, MKNK2/MNK2, RPS6KA5/MSK1, RPS6KA4/MSK2, MAPKAPK3 or MAPKAPK5) and phosphatases (such as DUSP1, DUSP4, DUSP6 or DUSP16) are other substrates which enable the propagation the MAPK/ERK signal to additional cytosolic and nuclear targets, thereby extending the specificity of the cascade. Mediates phosphorylation of TPR in response to EGF stimulation. May play a role in the spindle assembly checkpoint. Phosphorylates PML and promotes its interaction with PIN1, leading to PML degradation. Phosphorylates CDK2AP2. Phosphorylates phosphoglycerate kinase PGK1 under hypoxic conditions to promote its targeting to the mitochondrion and suppress the formation of acetyl-coenzyme A from pyruvate. Acts as a transcriptional repressor. Binds to a [GC]AAA[GC] consensus sequence. Repress the expression of interferon gamma-induced genes. Seems to bind to the promoter of CCL5, DMP1, IFIH1, IFITM1, IRF7, IRF9, LAMP3, OAS1, OAS2, OAS3 and STAT1. Transcriptional activity is independent of kinase activity. This chain is Mitogen-activated protein kinase 1, found in Mus musculus (Mouse).